A 365-amino-acid chain; its full sequence is tRNA(Met) cytidine acetate ligase (365 aa).

Residues Ile-7–Leu-20, Gly-96, Asn-152, and Arg-175 contribute to the ATP site.

This sequence belongs to the TmcAL family.

The protein localises to the cytoplasm. It carries out the reaction cytidine(34) in elongator tRNA(Met) + acetate + ATP = N(4)-acetylcytidine(34) in elongator tRNA(Met) + AMP + diphosphate. In terms of biological role, catalyzes the formation of N(4)-acetylcytidine (ac(4)C) at the wobble position of elongator tRNA(Met), using acetate and ATP as substrates. First activates an acetate ion to form acetyladenylate (Ac-AMP) and then transfers the acetyl group to tRNA to form ac(4)C34. In Streptococcus pneumoniae serotype 19F (strain G54), this protein is tRNA(Met) cytidine acetate ligase.